Consider the following 359-residue polypeptide: Threonine dehydratase biosynthetic, chloroplastic (359 aa).

2 consecutive ACT-like domains span residues 184-256 (ALLA…NFSH) and 278-349 (IFGE…LDNS).

The protein belongs to the serine/threonine dehydratase family. In terms of assembly, homotetramer. It depends on pyridoxal 5'-phosphate as a cofactor. Floral buds of untreated plants. After ABA treatment or mechanical wounding is mostly accumulated in leaves, to a lesser extent in stems, but not in roots. Expressed in anthers, carpel leaves, pith cells, sepals and petals. Not expressed in stomium, vascular bundles, epidermal cells or pollen mother cells.

Its subcellular location is the plastid. The protein resides in the chloroplast. The catalysed reaction is L-threonine = 2-oxobutanoate + NH4(+). It participates in amino-acid biosynthesis; L-isoleucine biosynthesis; 2-oxobutanoate from L-threonine: step 1/1. The chain is Threonine dehydratase biosynthetic, chloroplastic from Solanum tuberosum (Potato).